We begin with the raw amino-acid sequence, 165 residues long: Biosynthetic peptidoglycan transglycosylase (165 aa).

Belongs to the glycosyltransferase 51 family.

The protein localises to the cell inner membrane. It carries out the reaction [GlcNAc-(1-&gt;4)-Mur2Ac(oyl-L-Ala-gamma-D-Glu-L-Lys-D-Ala-D-Ala)](n)-di-trans,octa-cis-undecaprenyl diphosphate + beta-D-GlcNAc-(1-&gt;4)-Mur2Ac(oyl-L-Ala-gamma-D-Glu-L-Lys-D-Ala-D-Ala)-di-trans,octa-cis-undecaprenyl diphosphate = [GlcNAc-(1-&gt;4)-Mur2Ac(oyl-L-Ala-gamma-D-Glu-L-Lys-D-Ala-D-Ala)](n+1)-di-trans,octa-cis-undecaprenyl diphosphate + di-trans,octa-cis-undecaprenyl diphosphate + H(+). It functions in the pathway cell wall biogenesis; peptidoglycan biosynthesis. In terms of biological role, peptidoglycan polymerase that catalyzes glycan chain elongation from lipid-linked precursors. This is Biosynthetic peptidoglycan transglycosylase from Neisseria meningitidis.